A 496-amino-acid polypeptide reads, in one-letter code: E3 ubiquitin-protein ligase CBL-C (496 aa).

Residues 7–144 form a 4H region; the sequence is PRGWQRGEPR…SALFPAGKYC (138 aa). In terms of domain architecture, Cbl-PTB spans 7–320; sequence PRGWQRGEPR…GKKHNPDLTE (314 aa). Residues 145 to 217 form an EF-hand-like region; the sequence is GHLYQLTKGS…FEFDVFTRLF (73 aa). Positions 198, 200, 202, and 209 each coordinate Ca(2+). Residues 218 to 320 are SH2-like; it reads QPWPTLLRNW…GKKHNPDLTE (103 aa). Residue R263 coordinates 4-O-phospho-L-tyrosine. The interval 321–349 is linker; sequence LCRVEPYQRIQVSEEQLLLYQAMNSTFQL. Y340 carries the post-translational modification Phosphotyrosine; by SRC. The segment at 350 to 389 adopts an RING-type zinc-finger fold; it reads CKICAERDKDVRIEPCGHLLCSCCLAAWQDSDSQTCPFCR. The interval 350 to 494 is interaction with RET; sequence CKICAERDKD…RPRAREEATE (145 aa). Residues 432–453 are disordered; the sequence is PVIPSAPSLLPEDQFPQGPQDK.

In terms of assembly, interacts with Ubiquitin-conjugating enzyme E2 UBE2D2 and UBE2D3. Isoform 1 interacts with EGFR (tyrosine phosphorylated). Interacts with the SH3 domain proteins LYN and CRK. Interacts (via RING-type zinc finger) with TGFB1I1 (via LIM zinc-binding domain 2); the interaction is direct and enhances the E3 activity. Interacts directly with RET (inactive) and CD2AP; dissociates from RET upon RET activation by GDNF which also increases the interaction with CD2AP suggesting dissociation as CBLC:CD2AP complex. Interacts with SRC; the interaction is enhanced when SRC is phosphorylated at 'Tyr-419'. Post-translationally, phosphorylated on tyrosines by EGFR. In terms of processing, phosphorylated on multiple tyrosine residues by SRC. Isoform 1, but not isoform 2, is phosphorylated on tyrosines by EGFR. Autoubiquitinated, when phosphorylated at Tyr-340. Widely expressed in tissues, where the expression is restricted to epithelial cells (at protein level).

It catalyses the reaction S-ubiquitinyl-[E2 ubiquitin-conjugating enzyme]-L-cysteine + [acceptor protein]-L-lysine = [E2 ubiquitin-conjugating enzyme]-L-cysteine + N(6)-ubiquitinyl-[acceptor protein]-L-lysine.. Its activity is regulated as follows. Phosphorylation at Tyr-340 is necessary and sufficient for the activation of E3 activity. Acts as an E3 ubiquitin-protein ligase, which accepts ubiquitin from specific E2 ubiquitin-conjugating enzymes, and then transfers it to substrates promoting their degradation by the proteasome. Functionally coupled with the E2 ubiquitin-protein ligases UB2D1, UB2D2 and UB2D3. Regulator of EGFR mediated signal transduction; upon EGF activation, ubiquitinates EGFR. Isoform 1, but not isoform 2, inhibits EGF stimulated MAPK1 activation. Promotes ubiquitination of SRC phosphorylated at 'Tyr-424', has the highest ubiquitin ligase activity among CBL family proteins. In collaboration with CD2AP may act as regulatory checkpoint for Ret signaling by modulating the rate of RET degradation after ligand activation; CD2AP converts it from an inhibitor to a promoter of RET degradation; the function limits the potency of GDNF on neuronal survival. The protein is E3 ubiquitin-protein ligase CBL-C (Cblc) of Mus musculus (Mouse).